Consider the following 448-residue polypeptide: tRNA-2-methylthio-N(6)-dimethylallyladenosine synthase (448 aa).

The MTTase N-terminal domain maps to 2–119 (KKLYIKTFGC…LSDLIAQRRK (118 aa)). The [4Fe-4S] cluster site is built by Cys11, Cys48, Cys82, Cys156, Cys160, and Cys163. Positions 142–375 (RQTRGSAYVS…LALIEGQSNQ (234 aa)) constitute a Radical SAM core domain. Residues 378–444 (QKMLGKTERV…NYTLRGELVE (67 aa)) enclose the TRAM domain.

It belongs to the methylthiotransferase family. MiaB subfamily. Monomer. [4Fe-4S] cluster serves as cofactor.

It is found in the cytoplasm. The catalysed reaction is N(6)-dimethylallyladenosine(37) in tRNA + (sulfur carrier)-SH + AH2 + 2 S-adenosyl-L-methionine = 2-methylsulfanyl-N(6)-dimethylallyladenosine(37) in tRNA + (sulfur carrier)-H + 5'-deoxyadenosine + L-methionine + A + S-adenosyl-L-homocysteine + 2 H(+). In terms of biological role, catalyzes the methylthiolation of N6-(dimethylallyl)adenosine (i(6)A), leading to the formation of 2-methylthio-N6-(dimethylallyl)adenosine (ms(2)i(6)A) at position 37 in tRNAs that read codons beginning with uridine. This is tRNA-2-methylthio-N(6)-dimethylallyladenosine synthase from Polynucleobacter asymbioticus (strain DSM 18221 / CIP 109841 / QLW-P1DMWA-1) (Polynucleobacter necessarius subsp. asymbioticus).